Consider the following 450-residue polypeptide: Crh-like protein 4 (450 aa).

The N-terminal stretch at 1 to 21 is a signal peptide; that stretch reads MRLSLVGVAIGLLSSSAIVTA. A disulfide bond links Cys27 and Cys34. One can recognise a GH16 domain in the interval 46-228; it reads YDFTKGSSPD…WAGGETDYSA (183 aa). The active-site Nucleophile is the Glu119. The active-site Proton donor is the Glu123. Chitin-binding residues include Glu123, Lys201, Trp205, and Thr216. An N-linked (GlcNAc...) asparagine glycan is attached at Asn383.

This sequence belongs to the glycosyl hydrolase 16 family. CRH1 subfamily. The GPI-like anchor contains a phosphoceramide lipid group. The anchor position has not been determined.

Its subcellular location is the cell membrane. It localises to the secreted. The protein localises to the cell wall. The catalysed reaction is Random endo-hydrolysis of N-acetyl-beta-D-glucosaminide (1-&gt;4)-beta-linkages in chitin and chitodextrins.. Functionally, dual chitinase/transglycosylase that plays a role in cell wall architecture. Chitinase and transglycosylase activities are coupled. Required for the polysaccharide cross-linking at the septa and the cell wall. More specifically, transfers chitin to 1,6-beta-glucan in the cell wall. This chain is Crh-like protein 4, found in Aspergillus fumigatus (strain ATCC MYA-4609 / CBS 101355 / FGSC A1100 / Af293) (Neosartorya fumigata).